The primary structure comprises 345 residues: MSTELQNTIENNDIRESQMWNSKELKEAIKEIEKMFGKGSIMVLGQSDNLNIETFSSGSLLLDNALGIGGYPKGRIIEIYGPESSGKTTLSLHAICEVQKLGGIAAFIDAEHSLEPKYCQTLGIDTNKLLVSQPDNGEQALDILEMLINSNSIDLIVVDSVAALVPKTELDGEMSDQSIGLQARMMSKALRKLNWLIAKSNTTVIFINQLREKIGVIFGNPETTTGGKALKFFSSIRLEVRKAENILNNYEIIGNKIKIKVVKNKTAIPFKTTTISLLYNKGIDKLGELVDLLVSYEIIEKSGVWYSYQNEKIGQGRTSVIQWLNADENRINELTEQVKKLIKQD.

An ATP-binding site is contributed by 81 to 88; that stretch reads GPESSGKT.

This sequence belongs to the RecA family.

The protein resides in the cytoplasm. Functionally, can catalyze the hydrolysis of ATP in the presence of single-stranded DNA, the ATP-dependent uptake of single-stranded DNA by duplex DNA, and the ATP-dependent hybridization of homologous single-stranded DNAs. It interacts with LexA causing its activation and leading to its autocatalytic cleavage. This is Protein RecA from Mycoplasma mycoides.